A 177-amino-acid chain; its full sequence is Putative HVA22-like protein g (177 aa).

Residues 145-165 (QSTPKSKAEEKKETTIPKLDD) form a disordered region. Basic and acidic residues predominate over residues 150 to 165 (SKAEEKKETTIPKLDD).

The protein belongs to the DP1 family.

The polypeptide is Putative HVA22-like protein g (HVA22G) (Arabidopsis thaliana (Mouse-ear cress)).